Here is a 376-residue protein sequence, read N- to C-terminus: Anhydro-N-acetylmuramic acid kinase (376 aa).

11-18 (GTSMDGVD) is an ATP binding site.

It belongs to the anhydro-N-acetylmuramic acid kinase family.

It catalyses the reaction 1,6-anhydro-N-acetyl-beta-muramate + ATP + H2O = N-acetyl-D-muramate 6-phosphate + ADP + H(+). Its pathway is amino-sugar metabolism; 1,6-anhydro-N-acetylmuramate degradation. It participates in cell wall biogenesis; peptidoglycan recycling. Catalyzes the specific phosphorylation of 1,6-anhydro-N-acetylmuramic acid (anhMurNAc) with the simultaneous cleavage of the 1,6-anhydro ring, generating MurNAc-6-P. Is required for the utilization of anhMurNAc either imported from the medium or derived from its own cell wall murein, and thus plays a role in cell wall recycling. The protein is Anhydro-N-acetylmuramic acid kinase of Acinetobacter baylyi (strain ATCC 33305 / BD413 / ADP1).